The primary structure comprises 502 residues: Probable glycine dehydrogenase (decarboxylating) subunit 2 (502 aa).

The residue at position 273 (Lys273) is an N6-(pyridoxal phosphate)lysine.

The protein belongs to the GcvP family. C-terminal subunit subfamily. As to quaternary structure, the glycine cleavage system is composed of four proteins: P, T, L and H. In this organism, the P 'protein' is a heterodimer of two subunits. Requires pyridoxal 5'-phosphate as cofactor.

The enzyme catalyses N(6)-[(R)-lipoyl]-L-lysyl-[glycine-cleavage complex H protein] + glycine + H(+) = N(6)-[(R)-S(8)-aminomethyldihydrolipoyl]-L-lysyl-[glycine-cleavage complex H protein] + CO2. In terms of biological role, the glycine cleavage system catalyzes the degradation of glycine. The P protein binds the alpha-amino group of glycine through its pyridoxal phosphate cofactor; CO(2) is released and the remaining methylamine moiety is then transferred to the lipoamide cofactor of the H protein. This Pyrococcus abyssi (strain GE5 / Orsay) protein is Probable glycine dehydrogenase (decarboxylating) subunit 2.